The chain runs to 355 residues: Elongation factor Ts (355 aa).

The involved in Mg(2+) ion dislocation from EF-Tu stretch occupies residues 82–85 (TDFV).

Belongs to the EF-Ts family.

It localises to the cytoplasm. Its function is as follows. Associates with the EF-Tu.GDP complex and induces the exchange of GDP to GTP. It remains bound to the aminoacyl-tRNA.EF-Tu.GTP complex up to the GTP hydrolysis stage on the ribosome. The chain is Elongation factor Ts from Helicobacter pylori (strain P12).